A 70-amino-acid polypeptide reads, in one-letter code: uncharacterized protein (70 aa).

This sequence belongs to the opacity porin family.

This is an uncharacterized protein from Haemophilus influenzae (strain ATCC 51907 / DSM 11121 / KW20 / Rd).